The sequence spans 296 residues: L-isoleucine 3(1)-dioxygenase (296 aa).

Positions 176, 178, and 267 each coordinate Fe cation.

The protein belongs to the iron/ascorbate-dependent oxidoreductase family. L-ascorbate is required as a cofactor. It depends on Fe(2+) as a cofactor.

It catalyses the reaction L-isoleucine + 2-oxoglutarate + O2 = 3(1)-hydroxy-L-isoleucine + succinate + CO2. Catalyzes the hydroxylation of L-isoleucine at the C-4' position to form L-4'-hydroxyisoleucine (4'-HIL). Exhibits low activity with L-valine and L-methionine. This Pantoea ananatis (strain AJ13355) protein is L-isoleucine 3(1)-dioxygenase.